Here is a 497-residue protein sequence, read N- to C-terminus: Probable cytosol aminopeptidase (497 aa).

Lysine 263 and aspartate 268 together coordinate Mn(2+). Lysine 275 is an active-site residue. Mn(2+)-binding residues include aspartate 286, aspartate 345, and glutamate 347. Residue arginine 349 is part of the active site.

This sequence belongs to the peptidase M17 family. Mn(2+) is required as a cofactor.

The protein localises to the cytoplasm. It catalyses the reaction Release of an N-terminal amino acid, Xaa-|-Yaa-, in which Xaa is preferably Leu, but may be other amino acids including Pro although not Arg or Lys, and Yaa may be Pro. Amino acid amides and methyl esters are also readily hydrolyzed, but rates on arylamides are exceedingly low.. It carries out the reaction Release of an N-terminal amino acid, preferentially leucine, but not glutamic or aspartic acids.. Its function is as follows. Presumably involved in the processing and regular turnover of intracellular proteins. Catalyzes the removal of unsubstituted N-terminal amino acids from various peptides. The polypeptide is Probable cytosol aminopeptidase (Methylorubrum populi (strain ATCC BAA-705 / NCIMB 13946 / BJ001) (Methylobacterium populi)).